The sequence spans 122 residues: Small ribosomal subunit protein uS13 (122 aa).

The tract at residues lysine 94 to lysine 122 is disordered.

Belongs to the universal ribosomal protein uS13 family. In terms of assembly, part of the 30S ribosomal subunit. Forms a loose heterodimer with protein S19. Forms two bridges to the 50S subunit in the 70S ribosome.

Functionally, located at the top of the head of the 30S subunit, it contacts several helices of the 16S rRNA. In the 70S ribosome it contacts the 23S rRNA (bridge B1a) and protein L5 of the 50S subunit (bridge B1b), connecting the 2 subunits; these bridges are implicated in subunit movement. Contacts the tRNAs in the A and P-sites. The protein is Small ribosomal subunit protein uS13 of Syntrophus aciditrophicus (strain SB).